A 497-amino-acid chain; its full sequence is Serine hydroxymethyltransferase (497 aa).

Residues L176 and 180 to 182 (GHL) each bind (6S)-5,6,7,8-tetrahydrofolate. K289 bears the N6-(pyridoxal phosphate)lysine mark.

The protein belongs to the SHMT family. In terms of assembly, homodimer. It depends on pyridoxal 5'-phosphate as a cofactor.

It is found in the cytoplasm. The catalysed reaction is (6R)-5,10-methylene-5,6,7,8-tetrahydrofolate + glycine + H2O = (6S)-5,6,7,8-tetrahydrofolate + L-serine. The protein operates within one-carbon metabolism; tetrahydrofolate interconversion. Its pathway is amino-acid biosynthesis; glycine biosynthesis; glycine from L-serine: step 1/1. In terms of biological role, catalyzes the reversible interconversion of serine and glycine with tetrahydrofolate (THF) serving as the one-carbon carrier. This reaction serves as the major source of one-carbon groups required for the biosynthesis of purines, thymidylate, methionine, and other important biomolecules. Also exhibits THF-independent aldolase activity toward beta-hydroxyamino acids, producing glycine and aldehydes, via a retro-aldol mechanism. This chain is Serine hydroxymethyltransferase, found in Chlamydia muridarum (strain MoPn / Nigg).